Here is a 125-residue protein sequence, read N- to C-terminus: Large ribosomal subunit protein bL12 (125 aa).

Belongs to the bacterial ribosomal protein bL12 family. In terms of assembly, homodimer. Part of the ribosomal stalk of the 50S ribosomal subunit. Forms a multimeric L10(L12)X complex, where L10 forms an elongated spine to which 2 to 4 L12 dimers bind in a sequential fashion. Binds GTP-bound translation factors.

Forms part of the ribosomal stalk which helps the ribosome interact with GTP-bound translation factors. Is thus essential for accurate translation. The protein is Large ribosomal subunit protein bL12 of Thermoanaerobacter sp. (strain X514).